Consider the following 564-residue polypeptide: Nucleoprotein (564 aa).

Positions 54–236 are binding site for the cap structure m7GTP; it reads LRKNKRGEED…VTKDESSINI (183 aa). Mn(2+) is bound by residues Asp380 and Glu382. Positions 390, 497, 500, and 525 each coordinate Zn(2+). Residue Asp529 coordinates Mn(2+).

It belongs to the arenaviridae nucleocapsid protein family. In terms of assembly, homomultimerizes to form the nucleocapsid. Binds to viral genomic RNA. Interacts with glycoprotein G2. Interacts with protein Z; this interaction probably directs the encapsidated genome to budding sites. Interacts with protein L; this interaction does not interfere with Z-L interaction. Interacts with host IKBKE (via Protein kinase domain); the interaction inhibits IKBKE kinase activity.

Its subcellular location is the virion. The protein localises to the host cytoplasm. Encapsidates the genome, protecting it from nucleases. The encapsidated genomic RNA is termed the nucleocapsid (NC). Serves as template for viral transcription and replication. The increased presence of protein N in host cell does not seem to trigger the switch from transcription to replication as observed in other negative strain RNA viruses. Through the interaction with host IKBKE, strongly inhibits the phosphorylation and nuclear translocation of host IRF3, a protein involved in interferon activation pathway, leading to the inhibition of interferon-beta and IRF3-dependent promoters activation. Also encodes a functional 3'-5' exoribonuclease that degrades preferentially dsRNA substrates and thereby participates in the suppression of interferon induction. This chain is Nucleoprotein, found in Calomys callosus (Large vesper mouse).